The sequence spans 314 residues: (+)-neomenthol dehydrogenase (314 aa).

Residue Val-13–Val-36 coordinates NADP(+). Ser-183 contributes to the substrate binding site. Tyr-239 serves as the catalytic Proton acceptor.

Belongs to the short-chain dehydrogenases/reductases (SDR) family. As to quaternary structure, monomer. As to expression, expressed in flowers and red fruit tissues. Not detected in leaves, stems, roots or green fruits.

It catalyses the reaction (+)-neomenthol + NADP(+) = (1R,4S)-menthone + NADPH + H(+). Involved in basal resistance against pathogens. The sequence is that of (+)-neomenthol dehydrogenase (MNR1) from Capsicum annuum (Capsicum pepper).